The following is a 216-amino-acid chain: Ribosomal RNA large subunit methyltransferase E (216 aa).

Positions 60, 62, 80, 96, and 121 each coordinate S-adenosyl-L-methionine. The Proton acceptor role is filled by K161.

It belongs to the class I-like SAM-binding methyltransferase superfamily. RNA methyltransferase RlmE family.

The protein localises to the cytoplasm. The enzyme catalyses uridine(2552) in 23S rRNA + S-adenosyl-L-methionine = 2'-O-methyluridine(2552) in 23S rRNA + S-adenosyl-L-homocysteine + H(+). Functionally, specifically methylates the uridine in position 2552 of 23S rRNA at the 2'-O position of the ribose in the fully assembled 50S ribosomal subunit. The sequence is that of Ribosomal RNA large subunit methyltransferase E from Pseudomonas fluorescens (strain SBW25).